A 75-amino-acid polypeptide reads, in one-letter code: Exodeoxyribonuclease 7 small subunit (75 aa).

This sequence belongs to the XseB family. As to quaternary structure, heterooligomer composed of large and small subunits.

The protein resides in the cytoplasm. It catalyses the reaction Exonucleolytic cleavage in either 5'- to 3'- or 3'- to 5'-direction to yield nucleoside 5'-phosphates.. Its function is as follows. Bidirectionally degrades single-stranded DNA into large acid-insoluble oligonucleotides, which are then degraded further into small acid-soluble oligonucleotides. The chain is Exodeoxyribonuclease 7 small subunit from Thermotoga maritima (strain ATCC 43589 / DSM 3109 / JCM 10099 / NBRC 100826 / MSB8).